Reading from the N-terminus, the 266-residue chain is Phosphate import ATP-binding protein PstB 1 (266 aa).

An ABC transporter domain is found at 21-261 (ISTQDLSVFY…PKGEITEDYI (241 aa)). An ATP-binding site is contributed by 54 to 61 (GGSGSGKS).

This sequence belongs to the ABC transporter superfamily. Phosphate importer (TC 3.A.1.7) family. The complex is composed of two ATP-binding proteins (PstB), two transmembrane proteins (PstC and PstA) and a solute-binding protein (PstS).

The protein resides in the cell membrane. It catalyses the reaction phosphate(out) + ATP + H2O = ADP + 2 phosphate(in) + H(+). Part of the ABC transporter complex PstSACB involved in phosphate import. Responsible for energy coupling to the transport system. In Lactobacillus johnsonii (strain CNCM I-12250 / La1 / NCC 533), this protein is Phosphate import ATP-binding protein PstB 1.